Here is a 74-residue protein sequence, read N- to C-terminus: Conotoxin TsMLCL-04 (74 aa).

A signal peptide spans 1–19 (MLCLPVFIILLLLASPAAP). Positions 20-60 (NPLETRIQRDLIRAALEDADMKTNERFLEGVISTIKDFAGK) are excised as a propeptide.

The protein belongs to the conotoxin T superfamily. Contains 2 disulfide bonds that can be either 'C1-C3, C2-C4' or 'C1-C4, C2-C3', since these disulfide connectivities have been observed for conotoxins with cysteine framework V (for examples, see AC P0DQQ7 and AC P81755). As to expression, expressed by the venom duct.

The protein localises to the secreted. This Conus tessulatus (Tessellate cone) protein is Conotoxin TsMLCL-04.